The primary structure comprises 146 residues: Hemoglobin subunit beta (146 aa).

The Globin domain occupies 2-146; it reads HWTADEKQLI…VAHALALGYH (145 aa). The heme b site is built by His63 and His92.

This sequence belongs to the globin family. Heterotetramer of two alpha chains and two beta chains. In terms of tissue distribution, red blood cells.

Functionally, involved in oxygen transport from the lung to the various peripheral tissues. The protein is Hemoglobin subunit beta (HBB) of Chrysemys picta bellii (Western painted turtle).